Here is a 414-residue protein sequence, read N- to C-terminus: MSRQKKVLAIVLAGGEGKRLMPLTEDRAKPAVPFAGGYRLIDFALSNLVNSGYLQIVVLTQYKSHSLDRHLSETWRLSTQLGNYVTSVPAQQRRGKDWFLGSANAIYQSMNLIDDADPDIVVVVGADHVYRMDFADMVEKHIESGAKATVAGVRQPMEMVKSFGVIETDPQDPAKITRFVEKPDTTAPLPDDPHSFLASMGNYVFDRDALVEALRTDNEKADTDHDMGGDIMPYFAERGEAVVYDFTHNDVPGSTDRDRQYWRDVGTLESYFDSHMDLIRPLPVFNLYNYDWPIYTHQIMAPPARTVRGPNGQAGVAFDSIVSPGVLITGGHVGSSVLSPKVKVEHDARVTESVLMQNVQIGAGATVHRCILDKNVVVPPGTTVGLDREQDLARGLTVTESGLTIAPKNYRFER.

Residues glycine 164, 181–182, and serine 199 each bind alpha-D-glucose 1-phosphate; that span reads EK.

It belongs to the bacterial/plant glucose-1-phosphate adenylyltransferase family. Homotetramer.

The catalysed reaction is alpha-D-glucose 1-phosphate + ATP + H(+) = ADP-alpha-D-glucose + diphosphate. Its pathway is glycan biosynthesis; glycogen biosynthesis. In terms of biological role, involved in the biosynthesis of ADP-glucose, a building block required for the elongation reactions to produce glycogen. Catalyzes the reaction between ATP and alpha-D-glucose 1-phosphate (G1P) to produce pyrophosphate and ADP-Glc. The polypeptide is Glucose-1-phosphate adenylyltransferase (Kocuria rhizophila (strain ATCC 9341 / DSM 348 / NBRC 103217 / DC2201)).